Here is a 712-residue protein sequence, read N- to C-terminus: Polyribonucleotide nucleotidyltransferase (712 aa).

Mg(2+)-binding residues include Asp484 and Asp490. Positions 550–609 (PKYKTMDVNPEKIRVLIGPGGKNIKAIIEETGSDVEIQDSGVVNIFAPDTPTLDKTIKLI) constitute a KH domain. The S1 motif domain maps to 619-686 (GEVYDGIVKD…KGGKYSLSRK (68 aa)).

This sequence belongs to the polyribonucleotide nucleotidyltransferase family. The cofactor is Mg(2+).

It localises to the cytoplasm. It carries out the reaction RNA(n+1) + phosphate = RNA(n) + a ribonucleoside 5'-diphosphate. In terms of biological role, involved in mRNA degradation. Catalyzes the phosphorolysis of single-stranded polyribonucleotides processively in the 3'- to 5'-direction. This Brachyspira hyodysenteriae (strain ATCC 49526 / WA1) protein is Polyribonucleotide nucleotidyltransferase.